We begin with the raw amino-acid sequence, 230 residues long: Methyltransferase aurB (230 aa).

The protein belongs to the methyltransferase superfamily.

It participates in polyketide biosynthesis. In terms of biological role, methyltransferase; part of the gene cluster that mediates the biosynthesis of aurovertins, fungal polyketides that exhibit potent inhibition of adenosine triphosphate synthase. Tha biosynthesis starts with the HR-PKS aurA that selects propionate as the starter unit; synthesizes a hexa-ene chain through the repeated functions of the KR and DH domains in the first six iterations; selectively introduces three alpha-methyl substitutions at C4, C6, and C16 using the S-adensylmethionine-dependent cMET; and shuts off KR and DH in the last three iterations to afford a 1,3,5-triketo portion that can undergo intramolecular cyclization to yield the alpha-pyrone intermediate. AurE may act as a cyclase and enhances the rate of pyrone formation and product release of aurA. The methyltransferase aurB then methylates the C17 hydroxyl group. C17 methylation is required to initiate epoxidation by the downstream monooxygenase aurC. The monooxygenase aurC and the epoxide hydrolase aurD can iteratively transform the terminal triene portion of the methylated precursor into the dioxabicyclo[3.2.1]octane scaffold of aurovertin E. Epoxidation modifications of the precursor occur in two separate steps; bis-epoxidation of the two terminal olefins takes place first, followed by another epoxidation that occurs at C7-C8 after tetrahydrofuran formation. The O-acyltransferase aurG converts aurovertin E to aurovertin A. The sequence is that of Methyltransferase aurB from Calcarisporium arbuscula (Dendryphion arbuscula).